Consider the following 165-residue polypeptide: Chorismate pyruvate-lyase (165 aa).

4 residues coordinate substrate: Met-35, Arg-77, Leu-115, and Glu-156.

Belongs to the UbiC family. In terms of assembly, monomer.

Its subcellular location is the cytoplasm. The enzyme catalyses chorismate = 4-hydroxybenzoate + pyruvate. It functions in the pathway cofactor biosynthesis; ubiquinone biosynthesis. Its function is as follows. Removes the pyruvyl group from chorismate, with concomitant aromatization of the ring, to provide 4-hydroxybenzoate (4HB) for the ubiquinone pathway. This Escherichia coli O127:H6 (strain E2348/69 / EPEC) protein is Chorismate pyruvate-lyase.